We begin with the raw amino-acid sequence, 601 residues long: Glutathione-regulated potassium-efflux system protein KefB (601 aa).

13 helical membrane-spanning segments follow: residues 4–24 (SDFL…VPLA), 29–49 (IGAV…GLGF), 55–75 (EILH…GLEL), 87–107 (IFGV…GLLM), 115–135 (AAVV…LQLM), 152–172 (VLLF…LLAG), 177–197 (HFDW…LIGG), 207–227 (FIAA…LVLG), 230–250 (LFMD…GVLL), 268–288 (GLLL…GVLY), 291–311 (LLWV…VLYL), 324–344 (MQFA…FSTA), and 356–376 (ALLL…MKLV). The RCK N-terminal domain occupies 400–519 (KPQVIVVGFG…AGVTQFSRET (120 aa)).

The protein belongs to the monovalent cation:proton antiporter 2 (CPA2) transporter (TC 2.A.37) family. KefB subfamily. As to quaternary structure, interacts with the regulatory subunit KefG.

It is found in the cell inner membrane. In terms of biological role, pore-forming subunit of a potassium efflux system that confers protection against electrophiles. Catalyzes K(+)/H(+) antiport. The chain is Glutathione-regulated potassium-efflux system protein KefB from Escherichia coli O1:K1 / APEC.